Here is a 124-residue protein sequence, read N- to C-terminus: Small ribosomal subunit protein bS6 (124 aa).

Positions 93 to 124 (KKAETGPSSMMKTVEREEARKAQQAEYAANNS) are disordered. The span at 105–115 (TVEREEARKAQ) shows a compositional bias: basic and acidic residues.

It belongs to the bacterial ribosomal protein bS6 family.

In terms of biological role, binds together with bS18 to 16S ribosomal RNA. The polypeptide is Small ribosomal subunit protein bS6 (Variovorax paradoxus (strain S110)).